The chain runs to 520 residues: Maturase K (520 aa).

The protein belongs to the intron maturase 2 family. MatK subfamily.

It localises to the plastid. The protein localises to the chloroplast. In terms of biological role, usually encoded in the trnK tRNA gene intron. Probably assists in splicing its own and other chloroplast group II introns. In Aspidistra elatior (Cast-iron plant), this protein is Maturase K.